The chain runs to 103 residues: Large ribosomal subunit protein uL23 (103 aa).

This sequence belongs to the universal ribosomal protein uL23 family. Part of the 50S ribosomal subunit. Contacts protein L29, and trigger factor when it is bound to the ribosome.

In terms of biological role, one of the early assembly proteins it binds 23S rRNA. One of the proteins that surrounds the polypeptide exit tunnel on the outside of the ribosome. Forms the main docking site for trigger factor binding to the ribosome. The sequence is that of Large ribosomal subunit protein uL23 from Chlorobium chlorochromatii (strain CaD3).